The primary structure comprises 464 residues: Desmin (464 aa).

S2 bears the Blocked amino end (Ser) mark. A head region spans residues 2–100; the sequence is SQSYSSSQRV…QEFLQTRTNE (99 aa). Residues S7 and S23 each carry the phosphoserine; by CDK1 modification. T65 carries the post-translational modification Phosphothreonine; by CDK1. Positions 100 to 408 constitute an IF rod domain; the sequence is EKVELQELND…KLLEGEENRI (309 aa). The interval 101-133 is coil 1A; that stretch reads KVELQELNDRFANYIEKVRFLEQQNALMVAEVN. A linker 1 region spans residues 134 to 143; sequence RLRGKEPTRV. The segment at 144-244 is coil 1B; that stretch reads AEMYEEELRE…HEEEIRELQA (101 aa). Residues 245–260 are linker 12; that stretch reads QLQEQHIQVEMDISKP. Positions 261–279 are coil 2A; the sequence is DLTAALRDIRAQYESIAAK. Residues 280-287 form a linker 2 region; it reads NIAEAEEW. The segment at 288-404 is coil 2B; the sequence is YKSKVSDLTQ…ATYRKLLEGE (117 aa). The segment at 405 to 464 is tail; the sequence is ENRISIPMHQTFASALNFRETSPDQRGSEVHTKKTVMIKTIETRDGEVVSEATQQQHEVL.

It belongs to the intermediate filament family. As to quaternary structure, homomer.

It is found in the cytoplasm. It localises to the myofibril. The protein resides in the sarcomere. Its subcellular location is the z line. The protein localises to the cell membrane. It is found in the sarcolemma. Functionally, muscle-specific type III intermediate filament essential for proper muscular structure and function. Plays a crucial role in maintaining the structure of sarcomeres, inter-connecting the Z-disks and forming the myofibrils, linking them not only to the sarcolemmal cytoskeleton, but also to the nucleus and mitochondria, thus providing strength for the muscle fiber during activity. In adult striated muscle they form a fibrous network connecting myofibrils to each other and to the plasma membrane from the periphery of the Z-line structures. This Gallus gallus (Chicken) protein is Desmin (DES).